An 85-amino-acid polypeptide reads, in one-letter code: MLTNQLNSESKNINKIGSIEEQVVSLTQRVKFISNHLKINKKDYSSQRGLRKILGKRKRLLTYLYKKDFLKYKFVIQSLGIRSLK.

It belongs to the universal ribosomal protein uS15 family. Part of the 30S ribosomal subunit.

The protein localises to the plastid. The protein resides in the chloroplast. The sequence is that of Small ribosomal subunit protein uS15c (rps15) from Chaetosphaeridium globosum (Charophycean green alga).